Consider the following 352-residue polypeptide: Putative pectinesterase 11 (352 aa).

A helical membrane pass occupies residues 13–35 (ANYHHIIIINIFILSSITSSSMA). Residue N76 is glycosylated (N-linked (GlcNAc...) asparagine). Residue D175 is the Proton donor of the active site. D196 serves as the catalytic Nucleophile. N-linked (GlcNAc...) asparagine glycosylation is present at N218. Residues R252 and W254 each contribute to the substrate site. The disordered stretch occupies residues 332 to 352 (LRPAPSHFKNAPKQTQNKEIN). Residues 343 to 352 (PKQTQNKEIN) are compositionally biased toward polar residues.

The protein belongs to the pectinesterase family.

It is found in the membrane. It catalyses the reaction [(1-&gt;4)-alpha-D-galacturonosyl methyl ester](n) + n H2O = [(1-&gt;4)-alpha-D-galacturonosyl](n) + n methanol + n H(+). Its pathway is glycan metabolism; pectin degradation; 2-dehydro-3-deoxy-D-gluconate from pectin: step 1/5. Acts in the modification of cell walls via demethylesterification of cell wall pectin. This Arabidopsis thaliana (Mouse-ear cress) protein is Putative pectinesterase 11 (PME11).